A 591-amino-acid chain; its full sequence is Potassium channel KAT4 (591 aa).

Residues 1 to 32 (MAARSELLRPAFGEASPSLGRFVINPHSCSYR) are Cytoplasmic-facing. A helical membrane pass occupies residues 33–53 (WWHMFLIMLVLYSAWASPFEL). Over 54–63 (SMEKAASIAL) the chain is Extracellular. The chain crosses the membrane as a helical span at residues 64 to 84 (VVTDLVVDVFFAIDIALSFFV). The Cytoplasmic portion of the chain corresponds to 85–109 (AYRDTSTGLLITDRRKITMRYLKRP). The helical transmembrane segment at 110-130 (CFALDVASTIPLQIIYQLVTG) threads the bilayer. Topologically, residues 131–137 (KRQGLWG) are extracellular. The chain crosses the membrane as a helical; Voltage-sensor span at residues 138 to 158 (LLNLLRLWRLRRVSKLFARVE). At 159–172 (KDIRFNYLWTRLIK) the chain is on the cytoplasmic side. Residues 173–193 (LLCVTLFALHFAACIYLWMAF) form a helical membrane-spanning segment. The Extracellular segment spans residues 194–220 (NYKIKELTWIGSQIHSFEDRSVWFCYT). The pore-forming intramembrane region spans 221 to 240 (CAVYWSITTLATVGYGDLHA). Residues 241 to 246 (TNIGEM) are Extracellular-facing. The chain crosses the membrane as a helical span at residues 247-267 (LFSIAFMLFNMGLTSYIIGNI). The Cytoplasmic portion of the chain corresponds to 268-591 (TNLVVRETSN…IRDGDHLLFS (324 aa)). Residue 349 to 469 (LFQGVSDSLI…YIVFSNFIQY (121 aa)) participates in a nucleoside 3',5'-cyclic phosphate binding. The 71-residue stretch at 521 to 591 (RVVIHEQLPN…IRDGDHLLFS (71 aa)) folds into the KHA domain.

The protein belongs to the potassium channel family. Plant (TC 1.A.1.4) subfamily.

It is found in the membrane. Functionally, probable inward-rectifying potassium channel. Assuming opened or closed conformations in response to the voltage difference across the membrane, the channel is activated by hyperpolarization. The polypeptide is Potassium channel KAT4 (Oryza sativa subsp. japonica (Rice)).